A 289-amino-acid chain; its full sequence is MFFEIALIGTTASGKTYIANTLAREFDAVVLSLDSLCVYKEINIASAKPSQDDLASIKYFGVNLLSVNEHFNVELFIREYQKAKEFALARNLPLIIVGGTGFYLKTMIDGLSEKTLESKSSLNNDEIYTLLLNIDPNYKIEKNDTYRLKKWLGIYEQTREIPSEFLKRTQKTGVLKDIEIYELSWDKEILKKRIQTRTKEMLDNGLLDEAKILFSKFDHKLKALNSIGLKECKEYLDGEISFKELENLITIHTTQLAKRQRTFNKKFQSKALEFDKALAILRMKFSIEK.

9 to 16 is a binding site for ATP; the sequence is GTTASGKT. Residue 11 to 16 participates in substrate binding; that stretch reads TASGKT. Residues 34–37 are interaction with substrate tRNA; sequence DSLC.

The protein belongs to the IPP transferase family. Monomer. Mg(2+) serves as cofactor.

The catalysed reaction is adenosine(37) in tRNA + dimethylallyl diphosphate = N(6)-dimethylallyladenosine(37) in tRNA + diphosphate. In terms of biological role, catalyzes the transfer of a dimethylallyl group onto the adenine at position 37 in tRNAs that read codons beginning with uridine, leading to the formation of N6-(dimethylallyl)adenosine (i(6)A). The sequence is that of tRNA dimethylallyltransferase from Campylobacter jejuni subsp. jejuni serotype O:23/36 (strain 81-176).